The following is a 102-amino-acid chain: UPF0122 protein MPN_424 (102 aa).

Belongs to the UPF0122 family.

Its function is as follows. Might take part in the signal recognition particle (SRP) pathway. This is inferred from the conservation of its genetic proximity to ftsY/ffh. May be a regulatory protein. The chain is UPF0122 protein MPN_424 from Mycoplasma pneumoniae (strain ATCC 29342 / M129 / Subtype 1) (Mycoplasmoides pneumoniae).